A 194-amino-acid polypeptide reads, in one-letter code: Lachesicidin (194 aa).

Residues 1 to 22 (MQGFFWKTWLVLAVCGTPASLA) form the signal peptide. Residues 23–160 (HRPLSYGEAL…DEEKDQPKRV (138 aa)) constitute a propeptide that is removed on maturation. 2 disulfide bridges follow: Cys79/Cys90 and Cys101/Cys118. Positions 125-154 (EEEEEEEEEEQKAEAENDEEVEKEKEDEEK) are enriched in acidic residues. A disordered region spans residues 125-157 (EEEEEEEEEEQKAEAENDEEVEKEKEDEEKDQP).

It belongs to the cathelicidin family. Expressed by the venom gland.

Its subcellular location is the secreted. The protein resides in the target cell membrane. In terms of biological role, potent antimicrobial peptide against Gram-negative and Gram-positive bacteria. Adopts an amphipathic alpha helical conformation, that may allow to partition into the target membrane. Low hemolytic activities have been observed on mammalian cells. This Lachesis muta rhombeata (Bushmaster) protein is Lachesicidin.